We begin with the raw amino-acid sequence, 489 residues long: Cobyric acid synthase (489 aa).

The 194-residue stretch at 251–444 (GLIIAVIRLP…LHGIFANDTF (194 aa)) folds into the GATase cobBQ-type domain. Residue cysteine 329 is the Nucleophile of the active site. Residue histidine 436 is part of the active site.

The protein belongs to the CobB/CobQ family. CobQ subfamily.

It functions in the pathway cofactor biosynthesis; adenosylcobalamin biosynthesis. Its function is as follows. Catalyzes amidations at positions B, D, E, and G on adenosylcobyrinic A,C-diamide. NH(2) groups are provided by glutamine, and one molecule of ATP is hydrogenolyzed for each amidation. This is Cobyric acid synthase from Chloroflexus aurantiacus (strain ATCC 29366 / DSM 635 / J-10-fl).